We begin with the raw amino-acid sequence, 337 residues long: Ribosomal RNA small subunit methyltransferase H (337 aa).

S-adenosyl-L-methionine is bound by residues 36–38 (GGH), D56, F82, D100, and Q107. Positions 315–337 (LEERSKRIPNPQSPIPASQGDAQ) are disordered.

The protein belongs to the methyltransferase superfamily. RsmH family.

The protein localises to the cytoplasm. The catalysed reaction is cytidine(1402) in 16S rRNA + S-adenosyl-L-methionine = N(4)-methylcytidine(1402) in 16S rRNA + S-adenosyl-L-homocysteine + H(+). Specifically methylates the N4 position of cytidine in position 1402 (C1402) of 16S rRNA. The chain is Ribosomal RNA small subunit methyltransferase H from Xanthomonas euvesicatoria pv. vesicatoria (strain 85-10) (Xanthomonas campestris pv. vesicatoria).